Here is a 207-residue protein sequence, read N- to C-terminus: High frequency lysogenization protein HflD homolog (207 aa).

This sequence belongs to the HflD family.

It localises to the cytoplasm. Its subcellular location is the cell inner membrane. This is High frequency lysogenization protein HflD homolog from Tolumonas auensis (strain DSM 9187 / NBRC 110442 / TA 4).